A 376-amino-acid polypeptide reads, in one-letter code: Lipoyl synthase, mitochondrial (376 aa).

Residues C103, C108, C114, C134, C138, C141, and S349 each contribute to the [4Fe-4S] cluster site. A Radical SAM core domain is found at 119 to 338 (EHGTQTATIM…EDRGNQLGFL (220 aa)).

This sequence belongs to the radical SAM superfamily. Lipoyl synthase family. The cofactor is [4Fe-4S] cluster.

It localises to the mitochondrion. The enzyme catalyses [[Fe-S] cluster scaffold protein carrying a second [4Fe-4S](2+) cluster] + N(6)-octanoyl-L-lysyl-[protein] + 2 oxidized [2Fe-2S]-[ferredoxin] + 2 S-adenosyl-L-methionine + 4 H(+) = [[Fe-S] cluster scaffold protein] + N(6)-[(R)-dihydrolipoyl]-L-lysyl-[protein] + 4 Fe(3+) + 2 hydrogen sulfide + 2 5'-deoxyadenosine + 2 L-methionine + 2 reduced [2Fe-2S]-[ferredoxin]. The protein operates within protein modification; protein lipoylation via endogenous pathway; protein N(6)-(lipoyl)lysine from octanoyl-[acyl-carrier-protein]: step 2/2. Catalyzes the radical-mediated insertion of two sulfur atoms into the C-6 and C-8 positions of the octanoyl moiety bound to the lipoyl domains of lipoate-dependent enzymes, thereby converting the octanoylated domains into lipoylated derivatives. The sequence is that of Lipoyl synthase, mitochondrial from Drosophila ananassae (Fruit fly).